Consider the following 889-residue polypeptide: Protein argonaute 15 (889 aa).

Disordered stretches follow at residues 1-26 (MESH…SRKG) and 119-150 (EDAS…RMKR). Over residues 122–132 (SSSGRTTTRRS) the composition is skewed to low complexity. In terms of domain architecture, PAZ spans 264-379 (PVIEFLLFNQ…IPLELCHLVP (116 aa)). The region spanning 546 to 853 (FVLCVLPERK…AAAQVSQFVR (308 aa)) is the Piwi domain. The segment at 857–878 (AASEGSGDGGAPPRPVPELPRL) is disordered.

It belongs to the argonaute family. Ago subfamily.

Its function is as follows. Probably involved in the RNA silencing pathway. May bind to short RNAs such as microRNAs (miRNAs) or short interfering RNAs (siRNAs), and represses the translation of mRNAs which are complementary to them. The chain is Protein argonaute 15 (AGO15) from Oryza sativa subsp. japonica (Rice).